We begin with the raw amino-acid sequence, 258 residues long: Tryptophan synthase alpha chain (258 aa).

Residues Glu52 and Asp63 each act as proton acceptor in the active site.

The protein belongs to the TrpA family. As to quaternary structure, tetramer of two alpha and two beta chains.

The enzyme catalyses (1S,2R)-1-C-(indol-3-yl)glycerol 3-phosphate + L-serine = D-glyceraldehyde 3-phosphate + L-tryptophan + H2O. The protein operates within amino-acid biosynthesis; L-tryptophan biosynthesis; L-tryptophan from chorismate: step 5/5. The alpha subunit is responsible for the aldol cleavage of indoleglycerol phosphate to indole and glyceraldehyde 3-phosphate. In Streptococcus pneumoniae serotype 2 (strain D39 / NCTC 7466), this protein is Tryptophan synthase alpha chain.